The following is a 442-amino-acid chain: MDAWPRCLERLEAEFPPEDVHTWLKPLQAEDRGDSIVLYAPNAFIVDQVRERYLPRIRELLAYFAGNGEVALAVGSRPRAPEPAPAAAAVPSAPQAAPMVPFAGNLDSHYTFANFVEGRSNQLGLAAAIQAAQRPGDRAHNPLLLYGSTGLGKTHLMFAAGNALRQANPAAKVMYLRSEQFFSAMIRALQDKAMDQFKRQFQQIDALLIDDIQFFAGKDRTQEEFFHTFNALFDGRQQIILTCDRYPREVEGLEPRLKSRLAWGLSVAIDPPDFETRAAIVLAKARERGAEIPDDVAFLIAKKMRSNVRDLEGALNTLVARANFTGRSITVEFAQETLRDLLRAQQQAIGIPNIQKTVADYYGLQMKDLLSKRRTRSLARPRQVAMALAKELTEHSLPEIGDAFAGRDHTTVLHACRQIRTLMEADGKLREDWEKLIRKLSE.

Residues 1–75 (MDAWPRCLER…GNGEVALAVG (75 aa)) form a domain I, interacts with DnaA modulators region. Residues 75 to 104 (GSRPRAPEPAPAAAAVPSAPQAAPMVPFAG) form a domain II region. Positions 105 to 322 (NLDSHYTFAN…GALNTLVARA (218 aa)) are domain III, AAA+ region. ATP is bound by residues G150, G152, K153, and T154. The tract at residues 323 to 442 (NFTGRSITVE…WEKLIRKLSE (120 aa)) is domain IV, binds dsDNA.

This sequence belongs to the DnaA family. As to quaternary structure, oligomerizes as a right-handed, spiral filament on DNA at oriC.

Its subcellular location is the cytoplasm. Functionally, plays an essential role in the initiation and regulation of chromosomal replication. ATP-DnaA binds to the origin of replication (oriC) to initiate formation of the DNA replication initiation complex once per cell cycle. Binds the DnaA box (a 9 base pair repeat at the origin) and separates the double-stranded (ds)DNA. Forms a right-handed helical filament on oriC DNA; dsDNA binds to the exterior of the filament while single-stranded (ss)DNA is stabiized in the filament's interior. The ATP-DnaA-oriC complex binds and stabilizes one strand of the AT-rich DNA unwinding element (DUE), permitting loading of DNA polymerase. After initiation quickly degrades to an ADP-DnaA complex that is not apt for DNA replication. Binds acidic phospholipids. In Xanthomonas euvesicatoria pv. vesicatoria (strain 85-10) (Xanthomonas campestris pv. vesicatoria), this protein is Chromosomal replication initiator protein DnaA.